A 425-amino-acid chain; its full sequence is Serine--tRNA ligase (425 aa).

An L-serine-binding site is contributed by Thr230 to Glu232. Arg261–Glu263 contributes to the ATP binding site. Glu284 lines the L-serine pocket. Glu348–Ser351 provides a ligand contact to ATP. An L-serine-binding site is contributed by Ser384.

This sequence belongs to the class-II aminoacyl-tRNA synthetase family. Type-1 seryl-tRNA synthetase subfamily. As to quaternary structure, homodimer. The tRNA molecule binds across the dimer.

It localises to the cytoplasm. It catalyses the reaction tRNA(Ser) + L-serine + ATP = L-seryl-tRNA(Ser) + AMP + diphosphate + H(+). It carries out the reaction tRNA(Sec) + L-serine + ATP = L-seryl-tRNA(Sec) + AMP + diphosphate + H(+). It participates in aminoacyl-tRNA biosynthesis; selenocysteinyl-tRNA(Sec) biosynthesis; L-seryl-tRNA(Sec) from L-serine and tRNA(Sec): step 1/1. Catalyzes the attachment of serine to tRNA(Ser). Is also able to aminoacylate tRNA(Sec) with serine, to form the misacylated tRNA L-seryl-tRNA(Sec), which will be further converted into selenocysteinyl-tRNA(Sec). This Nitratidesulfovibrio vulgaris (strain DSM 19637 / Miyazaki F) (Desulfovibrio vulgaris) protein is Serine--tRNA ligase.